A 391-amino-acid chain; its full sequence is NAD(P)H-quinone oxidoreductase subunit H, chloroplastic (391 aa).

The protein belongs to the complex I 49 kDa subunit family. In terms of assembly, NDH is composed of at least 16 different subunits, 5 of which are encoded in the nucleus.

It is found in the plastid. It localises to the chloroplast thylakoid membrane. It catalyses the reaction a plastoquinone + NADH + (n+1) H(+)(in) = a plastoquinol + NAD(+) + n H(+)(out). It carries out the reaction a plastoquinone + NADPH + (n+1) H(+)(in) = a plastoquinol + NADP(+) + n H(+)(out). Its function is as follows. NDH shuttles electrons from NAD(P)H:plastoquinone, via FMN and iron-sulfur (Fe-S) centers, to quinones in the photosynthetic chain and possibly in a chloroplast respiratory chain. The immediate electron acceptor for the enzyme in this species is believed to be plastoquinone. Couples the redox reaction to proton translocation, and thus conserves the redox energy in a proton gradient. The chain is NAD(P)H-quinone oxidoreductase subunit H, chloroplastic from Nephroselmis olivacea (Green alga).